Reading from the N-terminus, the 484-residue chain is Probable protein disulfide-isomerase ER-60 (484 aa).

The first 14 residues, 1-14 (MRWLLSCLFLVAFA), serve as a signal peptide directing secretion. Thioredoxin domains follow at residues 15–125 (SCSK…SRAG) and 338–467 (FEDG…REAT). Catalysis depends on nucleophile residues cysteine 46, cysteine 49, cysteine 388, and cysteine 391. 2 disulfides stabilise this stretch: cysteine 46–cysteine 49 and cysteine 388–cysteine 391. The Prevents secretion from ER motif lies at 481 to 484 (KSEL).

The protein belongs to the protein disulfide isomerase family.

It localises to the endoplasmic reticulum lumen. It catalyses the reaction Catalyzes the rearrangement of -S-S- bonds in proteins.. The polypeptide is Probable protein disulfide-isomerase ER-60 (Schistosoma mansoni (Blood fluke)).